Consider the following 344-residue polypeptide: Phosphate acyltransferase (344 aa).

It belongs to the PlsX family. As to quaternary structure, homodimer. Probably interacts with PlsY.

It is found in the cytoplasm. The enzyme catalyses a fatty acyl-[ACP] + phosphate = an acyl phosphate + holo-[ACP]. It functions in the pathway lipid metabolism; phospholipid metabolism. Functionally, catalyzes the reversible formation of acyl-phosphate (acyl-PO(4)) from acyl-[acyl-carrier-protein] (acyl-ACP). This enzyme utilizes acyl-ACP as fatty acyl donor, but not acyl-CoA. This Cronobacter sakazakii (strain ATCC BAA-894) (Enterobacter sakazakii) protein is Phosphate acyltransferase.